The following is a 99-amino-acid chain: Defensin-like protein 2 (99 aa).

The N-terminal stretch at 1 to 30 (MAMAKKSVSSFTLIFILVLVIFEVPEIKAQ) is a signal peptide. Cystine bridges form between Cys-34-Cys-86, Cys-47-Cys-71, Cys-56-Cys-81, and Cys-60-Cys-83. The propeptide occupies 94–99 (ILRGGI).

It belongs to the DEFL family. Protease inhibitor I18 (RTI/MTI-2) subfamily.

The protein localises to the secreted. In terms of biological role, inhibits bovine beta-trypsin and alpha-chymotrypsin on a 1:1 molar basis. This is Defensin-like protein 2 from Sinapis alba (White mustard).